An 89-amino-acid polypeptide reads, in one-letter code: Cornifin (89 aa).

Residues 1-29 (MSSQQQKQPCTPPPQLQQQQVKQPCQPPP) form a disordered region. Ser2 is modified (N-acetylserine). Tandem repeats lie at residues 3-14 (SQQQKQPCTPPP), 18-29 (QQQVKQPCQPPP), 31-38 (EPCIPKTK), 39-46 (EPCLPKVP), 47-54 (EPCHPKVP), 55-62 (EPCQPKVP), 63-70 (EPCHPKVP), and 71-78 (EPCPSTVT). The tract at residues 3-29 (SQQQKQPCTPPPQLQQQQVKQPCQPPP) is 2 X 12 AA approximate repeats. Residues 31–78 (EPCIPKTKEPCLPKVPEPCHPKVPEPCQPKVPEPCHPKVPEPCPSTVT) are 6 X 8 AA approximate tandem repeats. Residues 68 to 89 (KVPEPCPSTVTPAPAQQKTKQK) form a disordered region. Positions 75 to 89 (STVTPAPAQQKTKQK) are enriched in polar residues.

It belongs to the cornifin (SPRR) family.

The protein localises to the cytoplasm. Its function is as follows. Cross-linked envelope protein of keratinocytes. It is a keratinocyte protein that first appears in the cell cytosol, but ultimately becomes cross-linked to membrane proteins by transglutaminase. All that results in the formation of an insoluble envelope beneath the plasma membrane. The sequence is that of Cornifin (SPRR1) from Macaca mulatta (Rhesus macaque).